A 415-amino-acid polypeptide reads, in one-letter code: MGSTALGGGAPARLGLAPKDGVFGSNLKQCGGFMLKTTPKVGSSSVRVRASVASSPQKQHSPKTSGVKSGEEVRIAVLGASGYTGAEIVRLLANHPQFRIKVMTADRKAGEQFGSVFPHLITQDLPNLVAVKDADFSNVDAVFCCLPHGTTQEIIKGLPQELKIVDLSADFRLRDINEYAEWYGHSHRAPELQQEAVYGLTEVLRNEIRNARLVANPGCYPTSIQLPLVPLIKAKLIKVSNIIIDAKSGVSGAGRGAKEANLYTEIAEGIHAYGIKGHRHVPEIEQGLSEAAESKVTISFTPNLICMKRGMQSTMFVEMAPGVTANDLYQHLKSTYEGEEFVKLLNGSSVPHTRHVVGSNYCFMNVFEDRIPGRAIIISVIDNLVKGASGQAVQNLNLMMGLPENTGLQYQPLFP.

Residues 1–74 (MGSTALGGGA…SGVKSGEEVR (74 aa)) constitute a chloroplast transit peptide. Residues 48–68 (VRASVASSPQKQHSPKTSGVK) are disordered. Residues 56–67 (PQKQHSPKTSGV) are compositionally biased toward polar residues. Residue Cys219 is part of the active site.

It belongs to the NAGSA dehydrogenase family. Type 1 subfamily. In terms of assembly, homotetramer.

The protein resides in the plastid. Its subcellular location is the chloroplast. The catalysed reaction is N-acetyl-L-glutamate 5-semialdehyde + phosphate + NADP(+) = N-acetyl-L-glutamyl 5-phosphate + NADPH + H(+). It functions in the pathway amino-acid biosynthesis; L-arginine biosynthesis; N(2)-acetyl-L-ornithine from L-glutamate: step 3/4. This is Probable N-acetyl-gamma-glutamyl-phosphate reductase, chloroplastic from Oryza sativa subsp. japonica (Rice).